Reading from the N-terminus, the 175-residue chain is Gamma-crystallin A (175 aa).

2 consecutive Beta/gamma crystallin 'Greek key' domains span residues 2-40 (GKITFYEDRGFQGHCYQCSSNNCLQQPYFSRCNSIRVDV) and 41-83 (HSWF…RLIP). Residues 84-88 (QHTGT) are connecting peptide. 2 Beta/gamma crystallin 'Greek key' domains span residues 89 to 129 (FRMR…RVLE) and 130 to 172 (GSWV…RRVM).

Belongs to the beta/gamma-crystallin family.

Crystallins are the dominant structural components of the vertebrate eye lens. The polypeptide is Gamma-crystallin A (CRYGA) (Bos taurus (Bovine)).